We begin with the raw amino-acid sequence, 452 residues long: UDP-N-acetylmuramoyl-tripeptide--D-alanyl-D-alanine ligase (452 aa).

113 to 119 (GSNGKTT) contributes to the ATP binding site.

It belongs to the MurCDEF family. MurF subfamily.

Its subcellular location is the cytoplasm. It carries out the reaction UDP-N-acetyl-alpha-D-muramoyl-L-alanyl-gamma-D-glutamyl-L-lysine + D-alanyl-D-alanine + ATP = UDP-N-acetyl-alpha-D-muramoyl-L-alanyl-gamma-D-glutamyl-L-lysyl-D-alanyl-D-alanine + ADP + phosphate + H(+). It participates in cell wall biogenesis; peptidoglycan biosynthesis. Functionally, involved in cell wall formation. Catalyzes the final step in the synthesis of UDP-N-acetylmuramoyl-pentapeptide, the precursor of murein. Catalyzes the addition of D-alanyl-D-alanine to UDP-MurNAc-L-alanyl-gamma-D-glutamyl-L-lysine. In vitro, can also use the mesodiaminopimelic acid-containing form of UDP-MurNAc-tripeptide, with the same efficiency, revealing that the discrimination for the amino acid residue at the third position of the peptide in the peptidoglycans is entirely supported by MurE. The protein is UDP-N-acetylmuramoyl-tripeptide--D-alanyl-D-alanine ligase of Staphylococcus aureus (strain NCTC 8325 / PS 47).